A 1067-amino-acid polypeptide reads, in one-letter code: Kinesin-like protein KIF11 (1067 aa).

The 342-residue stretch at 18–359 (NIQVVVRCRP…LEYANRAKNI (342 aa)) folds into the Kinesin motor domain. ATP is bound at residue 105–112 (GQTGTGKT). Residues 365-480 (VNQKLTKRAL…SKEQLAQEAF (116 aa)) adopt a coiled-coil conformation. Thr937 bears the Phosphothreonine; by CDK1 mark. Ser1046 is subject to Phosphoserine; by NEK6. The interval 1048–1067 (IMDEAEQSLPKSKLPLRMQN) is disordered.

It belongs to the TRAFAC class myosin-kinesin ATPase superfamily. Kinesin family. BimC subfamily. As to quaternary structure, heterotetramer of two heavy and two light chains. Interacts with aurka. Post-translationally, phosphorylation of Thr-937 during mitosis controls the association of this protein with the spindle apparatus. In terms of processing, a subset of this protein primarily localized at the spindle pole is phosphorylated by NEK6 during mitosis. Phosphorylated on a serine residue by aurka.

The protein localises to the cytoplasm. It is found in the cytoskeleton. Its subcellular location is the spindle pole. Functionally, plus end-directed motor protein required for establishing a bipolar spindle. Associates with both interphase and mitotic spindle microtubules. May be involved in nuclear divisions taking place during the development of unfertilized eggs. Required in non-mitotic cells for transport of secretory proteins from the Golgi complex to the cell surface. The chain is Kinesin-like protein KIF11 from Xenopus tropicalis (Western clawed frog).